Consider the following 295-residue polypeptide: Keratin-like protein KRT222 (295 aa).

The region spanning 1-150 (MELSQLLNEI…HLLEKEEIRY (150 aa)) is the IF rod domain. The stretch at 2-150 (ELSQLLNEIR…HLLEKEEIRY (149 aa)) forms a coiled coil.

It belongs to the intermediate filament family.

The chain is Keratin-like protein KRT222 (KRT222) from Homo sapiens (Human).